A 197-amino-acid polypeptide reads, in one-letter code: Protein shisa-4 (197 aa).

The first 27 residues, Met-1–Ala-27, serve as a signal peptide directing secretion. Residues Ser-28 to Ala-87 lie on the Extracellular side of the membrane. Residues Gly-88 to Leu-108 traverse the membrane as a helical segment. Residues Cys-109 to Ala-197 are Cytoplasmic-facing.

This sequence belongs to the shisa family.

The protein localises to the membrane. This Mus musculus (Mouse) protein is Protein shisa-4 (Shisa4).